A 742-amino-acid polypeptide reads, in one-letter code: Envelope glycoprotein H (742 aa).

The first 29 residues, 1–29 (MRPGLPSYLIVLAVCLLSHLLSSRYGAEA), serve as a signal peptide directing secretion. Topologically, residues 30-719 (ISEPLDKAFH…VVDATDSRLL (690 aa)) are virion surface. Residues Asn-55, Asn-62, Asn-67, and Asn-192 are each glycosylated (N-linked (GlcNAc...) asparagine; by host). Positions 217 to 280 (YLIDELRYVK…QTEKHELLVL (64 aa)) are interaction with gL. Residues Asn-641 and Asn-700 are each glycosylated (N-linked (GlcNAc...) asparagine; by host). Residues 720 to 740 (MMSVYALSAIIGIYLLYRMLK) form a helical membrane-spanning segment. Over 741–742 (TC) the chain is Intravirion.

Belongs to the herpesviridae glycoprotein H family. In terms of assembly, interacts with glycoprotein L (gL); this interaction is necessary for the correct processing and cell surface expression of gH. The heterodimer gH/gL seems to interact with gB trimers during fusion. Forms the envelope pentamer complex (PC) composed of gH, gL, UL128, UL130, and UL131A. The pentamer interacts with host NRP2. Forms the envelope trimer complex composed of gH, gL, and gO. The trimer interacts with host PDGFRA. The trimer also interacts with host EPHA2. In terms of processing, N-glycosylated, O-glycosylated, and sialylated.

Its subcellular location is the virion membrane. The protein resides in the host cell membrane. It is found in the host endosome membrane. Functionally, the heterodimer glycoprotein H-glycoprotein L is required for the fusion of viral and plasma membranes leading to virus entry into the host cell. Following initial binding to host receptor, membrane fusion is mediated by the fusion machinery composed of gB and the heterodimer gH/gL. May also be involved in the fusion between the virion envelope and the outer nuclear membrane during virion morphogenesis. In human cytomegalovirus, forms two distincts complexes to mediate viral entry, a trimer and a pentamer at the surface of the virion envelope. The gH-gL-gO trimer is required for infection in fibroblasts by interacting with host PDGFRA, and in glioblastoma cells by interacting with host EPHA2. The gH-gL-UL128-UL130-UL131A pentamer is essential for viral entry in epithelial, endothelial and myeloid cells via interaction with host NRP2. The chain is Envelope glycoprotein H from Human cytomegalovirus (strain Towne) (HHV-5).